The following is a 281-amino-acid chain: L-ornithine N(alpha)-acyltransferase (281 aa).

Belongs to the acetyltransferase family. OlsB subfamily.

The enzyme catalyses a (3R)-hydroxyacyl-[ACP] + L-ornithine = a lyso-ornithine lipid + holo-[ACP] + H(+). Its pathway is lipid metabolism. Functionally, catalyzes the first step in the biosynthesis of ornithine lipids, which are phosphorus-free membrane lipids. Catalyzes the 3-hydroxyacyl-acyl carrier protein-dependent acylation of ornithine to form lyso-ornithine lipid (LOL). This Brucella abortus (strain 2308) protein is L-ornithine N(alpha)-acyltransferase.